A 119-amino-acid polypeptide reads, in one-letter code: Non-structural protein 3b (119 aa).

The region spanning 2 to 83 (DYVSLLNQFW…ARLICEQLQA (82 aa)) is the DRBM domain.

As to quaternary structure, interacts with host RUNX1 isoform b.

Its subcellular location is the host nucleus. The protein localises to the host nucleolus. It localises to the host mitochondrion. Induces host cell G0/G1 arrest and apoptosis. This is Non-structural protein 3b from Tylonycteris pachypus (Lesser bamboo bat).